We begin with the raw amino-acid sequence, 393 residues long: MPLSAGSLRRRPKFAAPLLSPACLHRLSVPGEFAARLDDDDAAGVGEEEEEESGRRAAAVLVVGPLGKVWRVELRRSPAGDGEAWLGGGWSELAAAHGLGEGWGVVLRLERRGVASLRVFDPGFCLARFCTPHAGMRTKDRPRFIKLLQQEDLEKMKIPEKFVQQHLTETYTNNHQNAIIVCPLGKFWRVELQREQPDVLLRDGWAPFLAAHDLSEGNILLFRYEGNMVFTVEVFLQNGCLKEYKTAALYLTDGTEGPSNAPQQSAAKVGVSPVKRKRTRRIEGTCLEGPNRKSRASPISVKVEPHKKHVSIVSQNSFTKEMTAYSIHSLLSVRGTFCSQIGLLEACAITLKISMKKKGSWRVAFKTANTYGYINGPGWRKFCLENELEVQRR.

DNA-binding regions (TF-B3) lie at residues 27–123 (LSVP…FDPG), 141–238 (RPRF…FLQN), and 316–393 (NSFT…VQRR).

Its subcellular location is the nucleus. This chain is Putative B3 domain-containing protein Os06g0632500, found in Oryza sativa subsp. japonica (Rice).